The primary structure comprises 443 residues: 5-methylthioadenosine/S-adenosylhomocysteine deaminase 1 (443 aa).

Residues H69 and H71 each coordinate Zn(2+). Positions 98 and 191 each coordinate substrate. H218 provides a ligand contact to Zn(2+). Residues E221 and D306 each coordinate substrate. D306 provides a ligand contact to Zn(2+).

It belongs to the metallo-dependent hydrolases superfamily. MTA/SAH deaminase family. Zn(2+) serves as cofactor.

The enzyme catalyses S-adenosyl-L-homocysteine + H2O + H(+) = S-inosyl-L-homocysteine + NH4(+). It carries out the reaction S-methyl-5'-thioadenosine + H2O + H(+) = S-methyl-5'-thioinosine + NH4(+). In terms of biological role, catalyzes the deamination of 5-methylthioadenosine and S-adenosyl-L-homocysteine into 5-methylthioinosine and S-inosyl-L-homocysteine, respectively. Is also able to deaminate adenosine. This chain is 5-methylthioadenosine/S-adenosylhomocysteine deaminase 1, found in Syntrophus aciditrophicus (strain SB).